The chain runs to 38 residues: Cytochrome b559 subunit beta (38 aa).

Residues 13 to 29 (WLAVHALAVPTVFFLGS) form a helical membrane-spanning segment. His-17 provides a ligand contact to heme.

The protein belongs to the PsbE/PsbF family. Heterodimer of an alpha subunit and a beta subunit. PSII is composed of 1 copy each of membrane proteins PsbA, PsbB, PsbC, PsbD, PsbE, PsbF, PsbH, PsbI, PsbJ, PsbK, PsbL, PsbM, PsbT, PsbX, PsbY, PsbZ, Psb30/Ycf12, at least 3 peripheral proteins of the oxygen-evolving complex and a large number of cofactors. It forms dimeric complexes. It depends on heme b as a cofactor.

The protein resides in the plastid. Its subcellular location is the chloroplast thylakoid membrane. This b-type cytochrome is tightly associated with the reaction center of photosystem II (PSII). PSII is a light-driven water:plastoquinone oxidoreductase that uses light energy to abstract electrons from H(2)O, generating O(2) and a proton gradient subsequently used for ATP formation. It consists of a core antenna complex that captures photons, and an electron transfer chain that converts photonic excitation into a charge separation. The polypeptide is Cytochrome b559 subunit beta (Ostreococcus tauri).